Reading from the N-terminus, the 464-residue chain is Soluble pyridine nucleotide transhydrogenase (464 aa).

35 to 44 serves as a coordination point for FAD; it reads DSRREVGGNC.

This sequence belongs to the class-I pyridine nucleotide-disulfide oxidoreductase family. Requires FAD as cofactor.

It is found in the cytoplasm. The catalysed reaction is NAD(+) + NADPH = NADH + NADP(+). Functionally, conversion of NADPH, generated by peripheral catabolic pathways, to NADH, which can enter the respiratory chain for energy generation. This Pseudomonas syringae pv. tomato (strain ATCC BAA-871 / DC3000) protein is Soluble pyridine nucleotide transhydrogenase.